Here is a 367-residue protein sequence, read N- to C-terminus: 4-hydroxy-3-methylbut-2-en-1-yl diphosphate synthase (flavodoxin) (367 aa).

Residues Cys270, Cys273, Cys305, and Glu312 each contribute to the [4Fe-4S] cluster site.

The protein belongs to the IspG family. [4Fe-4S] cluster serves as cofactor.

The catalysed reaction is (2E)-4-hydroxy-3-methylbut-2-enyl diphosphate + oxidized [flavodoxin] + H2O + 2 H(+) = 2-C-methyl-D-erythritol 2,4-cyclic diphosphate + reduced [flavodoxin]. Its pathway is isoprenoid biosynthesis; isopentenyl diphosphate biosynthesis via DXP pathway; isopentenyl diphosphate from 1-deoxy-D-xylulose 5-phosphate: step 5/6. In terms of biological role, converts 2C-methyl-D-erythritol 2,4-cyclodiphosphate (ME-2,4cPP) into 1-hydroxy-2-methyl-2-(E)-butenyl 4-diphosphate. This is 4-hydroxy-3-methylbut-2-en-1-yl diphosphate synthase (flavodoxin) from Pasteurella multocida (strain Pm70).